The chain runs to 500 residues: Probable malate:quinone oxidoreductase (500 aa).

This sequence belongs to the MQO family. FAD is required as a cofactor.

It catalyses the reaction (S)-malate + a quinone = a quinol + oxaloacetate. It functions in the pathway carbohydrate metabolism; tricarboxylic acid cycle; oxaloacetate from (S)-malate (quinone route): step 1/1. This chain is Probable malate:quinone oxidoreductase, found in Bacillus cytotoxicus (strain DSM 22905 / CIP 110041 / 391-98 / NVH 391-98).